The chain runs to 376 residues: Transcription initiation factor IIA subunit 1 (376 aa).

Residue alanine 2 is modified to N-acetylalanine. Composition is skewed to low complexity over residues 69–79 (QVQQQHQPQQQ) and 89–105 (QAQPQQTVPQQAQTQQV). Disordered regions lie at residues 69 to 107 (QVQQQHQPQQQQHHHHHHHQQAQPQQTVPQQAQTQQVLI), 247 to 266 (QAQITATGQQQPQAQPAQTQ), and 274 to 329 (DGTG…QELF). Residues serine 280, serine 281, serine 316, and serine 321 each carry the phosphoserine; by TAF1 modification. Residues 280–329 (SSEEDEDEEEDYDDDEEEDKEKDGAEDGQVEEEPLNSEDDVSDEEGQELF) show a composition bias toward acidic residues. Positions 343 and 344 each coordinate DNA.

It belongs to the TFIIA subunit 1 family. In terms of assembly, TFIIA is a heterodimer of the large unprocessed subunit 1 and a small subunit gamma. It was originally believed to be a heterotrimer of an alpha (p35), a beta (p19) and a gamma subunit (p12). TFIIA forms a complex with TBP. Part of TBP-based Pol II pre-initiation complex (PIC), in which Pol II core assembles with general transcription factors and other specific initiation factors including GTF2E1, GTF2E2, GTF2F1, GTF2F2, TCEA1, ERCC2, ERCC3, GTF2H2, GTF2H3, GTF2H4, GTF2H5, GTF2A1, GTF2A2, GTF2B and TBP; this large multi-subunit PIC complex mediates DNA unwinding and targets Pol II core to the transcription start site where the first phosphodiester bond forms. Post-translationally, the alpha and beta subunits are postranslationally produced from the precursor form by TASP1. The cleavage promotes proteasomal degradation.

Its subcellular location is the nucleus. Functionally, TFIIA is a component of the transcription machinery of RNA polymerase II and plays an important role in transcriptional activation. TFIIA in a complex with TBP mediates transcriptional activity. The sequence is that of Transcription initiation factor IIA subunit 1 (GTF2A1) from Homo sapiens (Human).